Reading from the N-terminus, the 896-residue chain is Histone-lysine N-methyltransferase CLF (896 aa).

2 disordered regions span residues 344–419 (DNLK…NRRI) and 459–514 (SGIK…DGCD). Over residues 358 to 390 (GSSGQKTKSQQSESSSTARVSSESSESEVQLLS) the composition is skewed to low complexity. Polar residues-rich tracts occupy residues 391-400 (NKSPQHSPGL), 465-476 (VVSSQCNSPSTR), and 485-498 (QMEN…AQSD). Positions 504–514 (NNEHSATDGCD) are enriched in basic and acidic residues. In terms of domain architecture, CXC spans 633-732 (RKRITERKDQ…TLGVPNQRGD (100 aa)). An SET domain is found at 747–862 (QRVLLGRSDV…AGEELFYDYR (116 aa)). Residue tyrosine 861 participates in S-adenosyl-L-methionine binding. A compositionally biased stretch (basic and acidic residues) spans 869-884 (PAWARKPEGPGAKDDA). Residues 869-896 (PAWARKPEGPGAKDDAQPSTGRAKKLAH) form a disordered region.

This sequence belongs to the class V-like SAM-binding methyltransferase superfamily. Histone-lysine methyltransferase family. EZ subfamily. As to quaternary structure, interacts with FIE1. Component of the polycomb repressive complex 2 (PRC2), composed of the core PRC2 components FIE2, EMF2B and EZ1. PRC2 methylates 'Lys-27' residues of histone H3 (H3K27me3), leading to transcriptional repression of the affected target gene. Widely expressed. Highly expressed in young panicle.

It carries out the reaction L-lysyl(27)-[histone H3] + 3 S-adenosyl-L-methionine = N(6),N(6),N(6)-trimethyl-L-lysyl(27)-[histone H3] + 3 S-adenosyl-L-homocysteine + 3 H(+). Functionally, polycomb group (PcG) protein. Catalytic subunit of some PcG multiprotein complex, which methylates 'Lys-27' of histone H3, leading to transcriptional repression of the affected target genes. PcG proteins act by forming multiprotein complexes, which are required to maintain the transcriptionally repressive state of homeotic genes throughout development. PcG proteins are not required to initiate repression, but to maintain it during later stages of development. Involved in the regulation of flowering. Represses flowering under long day (LD) conditions. Regulates the trimethylation on histone H3 'Lys-27' (H3K27me3) of the flowering regulators MADS14, MADS15, RFT1, EHD1, HD3A and LF. This Oryza sativa subsp. japonica (Rice) protein is Histone-lysine N-methyltransferase CLF.